The following is a 448-amino-acid chain: tRNA wybutosine-synthesizing protein 2 homolog (448 aa).

Residues S218, K225, E265, and 293-294 (DN) contribute to the S-adenosyl-L-methionine site.

It belongs to the class I-like SAM-binding methyltransferase superfamily. TRM5/TYW2 family.

The enzyme catalyses 4-demethylwyosine(37) in tRNA(Phe) + S-adenosyl-L-methionine = 4-demethyl-7-[(3S)-3-amino-3-carboxypropyl]wyosine(37) in tRNA(Phe) + S-methyl-5'-thioadenosine + H(+). It participates in tRNA modification; wybutosine-tRNA(Phe) biosynthesis. Its function is as follows. S-adenosyl-L-methionine-dependent transferase that acts as a component of the wybutosine biosynthesis pathway. Wybutosine is a hyper modified guanosine with a tricyclic base found at the 3'-position adjacent to the anticodon of eukaryotic phenylalanine tRNA. Catalyzes the transfer of the alpha-amino-alpha-carboxypropyl (acp) group from S-adenosyl-L-methionine to the C-7 position of 4-demethylwyosine (imG-14) to produce wybutosine-86. This chain is tRNA wybutosine-synthesizing protein 2 homolog (TRMT12), found in Macaca fascicularis (Crab-eating macaque).